Consider the following 427-residue polypeptide: tRNA(Ile)-lysidine synthase (427 aa).

Position 27-32 (27-32) interacts with ATP; it reads SGGVDS.

It belongs to the tRNA(Ile)-lysidine synthase family.

It is found in the cytoplasm. It carries out the reaction cytidine(34) in tRNA(Ile2) + L-lysine + ATP = lysidine(34) in tRNA(Ile2) + AMP + diphosphate + H(+). Functionally, ligates lysine onto the cytidine present at position 34 of the AUA codon-specific tRNA(Ile) that contains the anticodon CAU, in an ATP-dependent manner. Cytidine is converted to lysidine, thus changing the amino acid specificity of the tRNA from methionine to isoleucine. The protein is tRNA(Ile)-lysidine synthase of Streptococcus equi subsp. zooepidemicus (strain H70).